Reading from the N-terminus, the 294-residue chain is MSLARFTQPRVLLPVVAAATSIGLVYHYSSLSIQNDTAKTFKGGDEWIDLKLKKSWDVSSNTRHFVFELKSPEDVSGLVTASCLMTKFVTAKGNNVIRPYTPVSDVDQKGTIDFVIKKYDGGKMSTHFHGLKEGDTVSFKGPIVKWKWEPNQFQSIALIGGGTGITPLYQLLHEITKNPEDKTKVKLFYGNLTEEDILIKKELDDIAEKHKDQVSITYFVDKASANWKGETGHIDKEFLQSNLPGPSKDSKVFVCGPPGLYKALSGVKVSPTDQGEVTGVLAELGYTKENVYKF.

The chain crosses the membrane as a helical span at residues 11-27 (VLLPVVAAATSIGLVYH). The FAD-binding FR-type domain maps to 45 to 149 (DEWIDLKLKK…KGPIVKWKWE (105 aa)). 152 to 187 (QFQSIALIGGGTGITPLYQLLHEITKNPEDKTKVKL) lines the FAD pocket.

The protein belongs to the flavoprotein pyridine nucleotide cytochrome reductase family. FAD serves as cofactor.

It localises to the mitochondrion outer membrane. It carries out the reaction 2 Fe(III)-[cytochrome b5] + NADH = 2 Fe(II)-[cytochrome b5] + NAD(+) + H(+). Its function is as follows. May mediate the reduction of outer membrane cytochrome b5. This Meyerozyma guilliermondii (strain ATCC 6260 / CBS 566 / DSM 6381 / JCM 1539 / NBRC 10279 / NRRL Y-324) (Yeast) protein is NADH-cytochrome b5 reductase 2 (MCR1).